The following is a 327-amino-acid chain: Gamma-resorcylate decarboxylase (327 aa).

2 residues coordinate Zn(2+): Glu-8 and His-10. 3 residues coordinate 2,6-dihydroxybenzoate: Phe-23, His-164, and Asp-287. His-164 and Asp-287 together coordinate Zn(2+). Residue Asp-287 is part of the active site.

It belongs to the metallo-dependent hydrolases superfamily. ACMSD family. As to quaternary structure, homotetramer. Dimer of dimers. Zn(2+) serves as cofactor.

It catalyses the reaction 2,6-dihydroxybenzoate + H(+) = resorcinol + CO2. The enzyme catalyses 2,3-dihydroxybenzoate + H(+) = catechol + CO2. It participates in aromatic compound metabolism. Inhibited by CuCl(2), monoiodoacetate and diethylpyrocarbonate. Inhibited by 2,3-dihydroxybenzaldehyde, which is an analog of the substrate 2,3-dihydroxybenzoate. Its function is as follows. Involved in the gamma-resorcylate (2,6-dihydroxybenzoate) catabolism. Catalyzes the reversible decarboxylation of gamma-resorcylate to resorcinol. The reaction is reversible, but equilibrium greatly favors the decarboxylation reaction. Also catalyzes the decarboxylation of 2,3-dihydroxybenzoate to catechol, but does not act on 2,4-dihydroxybenzoate, 2,5-dihydroxybenzoate, 3,4-dihydroxybenzoate, 3,5-dihydroxybenzoate, 2-hydroxybenzoate, or 3-hydroxybenzoate. Only resorcinol is carboxylated by the reverse reaction. This chain is Gamma-resorcylate decarboxylase, found in Rhizobium sp. (strain MTP-10005).